Reading from the N-terminus, the 223-residue chain is Phosphoribosylformylglycinamidine synthase subunit PurQ (223 aa).

A Glutamine amidotransferase type-1 domain is found at 4–223 (FAVVVFPGTN…FKGMVEWVRS (220 aa)). C85 (nucleophile) is an active-site residue. Active-site residues include H196 and E198.

In terms of assembly, part of the FGAM synthase complex composed of 1 PurL, 1 PurQ and 2 PurS subunits.

The protein resides in the cytoplasm. It catalyses the reaction N(2)-formyl-N(1)-(5-phospho-beta-D-ribosyl)glycinamide + L-glutamine + ATP + H2O = 2-formamido-N(1)-(5-O-phospho-beta-D-ribosyl)acetamidine + L-glutamate + ADP + phosphate + H(+). The catalysed reaction is L-glutamine + H2O = L-glutamate + NH4(+). Its pathway is purine metabolism; IMP biosynthesis via de novo pathway; 5-amino-1-(5-phospho-D-ribosyl)imidazole from N(2)-formyl-N(1)-(5-phospho-D-ribosyl)glycinamide: step 1/2. In terms of biological role, part of the phosphoribosylformylglycinamidine synthase complex involved in the purines biosynthetic pathway. Catalyzes the ATP-dependent conversion of formylglycinamide ribonucleotide (FGAR) and glutamine to yield formylglycinamidine ribonucleotide (FGAM) and glutamate. The FGAM synthase complex is composed of three subunits. PurQ produces an ammonia molecule by converting glutamine to glutamate. PurL transfers the ammonia molecule to FGAR to form FGAM in an ATP-dependent manner. PurS interacts with PurQ and PurL and is thought to assist in the transfer of the ammonia molecule from PurQ to PurL. This is Phosphoribosylformylglycinamidine synthase subunit PurQ from Pyrococcus furiosus (strain ATCC 43587 / DSM 3638 / JCM 8422 / Vc1).